A 396-amino-acid polypeptide reads, in one-letter code: Putative ribosomal RNA large subunit methyltransferase YwbD (396 aa).

The PUA domain occupies 1-79 (MKLLTLKKAH…KHEQIDQAFF (79 aa)).

This sequence belongs to the methyltransferase superfamily. RlmI family.

Its subcellular location is the cytoplasm. In Bacillus subtilis (strain 168), this protein is Putative ribosomal RNA large subunit methyltransferase YwbD (ywbD).